Reading from the N-terminus, the 24-residue chain is Brevinin-1BYc (24 aa).

An intrachain disulfide couples Cys18 to Cys24.

Expressed by the skin glands.

The protein localises to the secreted. In terms of biological role, antibacterial activity against Gram-positive bacterium S.aureus. Weak antifungal activity against C.albicans. This Rana boylii (Foothill yellow-legged frog) protein is Brevinin-1BYc.